Here is a 1781-residue protein sequence, read N- to C-terminus: Atrochrysone carboxylic acid synthase (1781 aa).

Positions 15–253 (TRDLFRRLHV…KHVALPVYAG (239 aa)) are N-terminal acylcarrier protein transacylase domain (SAT). Residues 390–823 (QSKIAIVGMA…GGNTSVVVEE (434 aa)) form the Ketosynthase family 3 (KS3) domain. Residues Cys563, His698, and His741 each act as for beta-ketoacyl synthase activity in the active site. The tract at residues 925 to 1244 (FAFTGQGASH…SLGLLHCAGL (320 aa)) is malonyl-CoA:ACP transacylase (MAT) domain. The interval 1312-1631 (TSTVQQIIEE…RVLLNRFFSA (320 aa)) is product template (PT) domain. Residues 1316–1451 (QQIIEETFSD…ADIVYGLPTD (136 aa)) form an N-terminal hotdog fold region. Residues 1316–1626 (QQIIEETFSD…FRRYPRVLLN (311 aa)) enclose the PKS/mFAS DH domain. The active-site Proton acceptor; for dehydratase activity is the His1348. Residues 1478 to 1626 (IANRLSHNMA…FRRYPRVLLN (149 aa)) form a C-terminal hotdog fold region. The Proton donor; for dehydratase activity role is filled by Asp1537. The interval 1633-1653 (DSDTSKHTSATDVSPPKKVVQ) is disordered. One can recognise a Carrier domain in the interval 1703 to 1780 (VDSDSTASKA…DLKAWLMEYY (78 aa)). Ser1740 carries the post-translational modification O-(pantetheine 4'-phosphoryl)serine.

It carries out the reaction holo-[ACP] + 8 malonyl-CoA + 8 H(+) = atrochrysone carboxyl-[ACP] + 8 CO2 + 8 CoA + 2 H2O. The protein operates within secondary metabolite biosynthesis. Functionally, atrochrysone carboxylic acid synthase; part of the gene cluster that mediates the biosynthesis of the dimeric xanthones cryptosporioptides. The pathway begins with the synthesis of atrochrysone thioester by the polyketide synthase dmx-nrPKS. The atrochrysone carboxyl ACP thioesterase dmxR1 then breaks the thioester bond and releases the atrochrysone carboxylic acid from dmx-nrPKS. Atrochrysone carboxylic acid is decarboxylated by the decarboxylase dmxR15, and oxidized by the anthrone oxygenase dmxR16 to yield emodin. Emodin is then reduced to emodin hydroquinone by the oxidoreductase dmxR7. A-ring reduction by the short chain dehydrogenase dmxR18, dehydration by the scytalone dehydratase-like protein dmxR17 and probable spontaneous re-oxidation, results in overall deoxygenation to chrysophanol. Baeyer-Villiger oxidation by the Baeyer-Villiger monooxygenase (BVMO) dmxR6 then yields monodictylactone in equilibrium with monodictyphenone. In the case of the cryptosporioptides biosynthesis, monodictylactone is reduced at C-12 to an alcohol (by the short chain dehydrogenases dmxR12 or dmxR8) and hydroxylated at C-5 by dmxR9, yielding the electron-rich aromatic which could eliminate H(2)O to form the ortho-quinonemethide, followed by tautomerisation to paraquinone and complete the formal reduction to produce the 10-methylgroup. Conjugate addition of C-4a-OH to the resulting paraquinone by the monooxygenase dmxR10 then gives cyclohexadienone, which is then reduced at C-5 by the short chain dehydrogenase dmxR3 to give the dihydroxanthone. The 6,7-epoxide in the cryptosporioptides could be introduced by the cytochrome P450 monooxygenase dmxL3. The highly reducing PKS dmxL2 manufactures butyrate, which is further carboxylated by dmxL1 to form ethylmalonate. It is not yet clear whether the carboxylation occurs while the butyrate is attached to the ACP of dmxL2, but this unusual fungal metabolite could then be esterified to O-5 by the O-acetyltransferase dmxR13. Finally, dimerization performed by dmxR5 gives the observed dimers cryptosporioptides A, B and C as the final products of the pathway. This Cryptosporiopsis sp. (strain 8999) protein is Atrochrysone carboxylic acid synthase.